The sequence spans 371 residues: DNA replication and repair protein RecF (371 aa).

Residue 30–37 (GPNAQGKT) participates in ATP binding.

It belongs to the RecF family.

The protein localises to the cytoplasm. Its function is as follows. The RecF protein is involved in DNA metabolism; it is required for DNA replication and normal SOS inducibility. RecF binds preferentially to single-stranded, linear DNA. It also seems to bind ATP. This chain is DNA replication and repair protein RecF, found in Desulforamulus reducens (strain ATCC BAA-1160 / DSM 100696 / MI-1) (Desulfotomaculum reducens).